We begin with the raw amino-acid sequence, 478 residues long: Glycogen synthase (478 aa).

Lys20 lines the ADP-alpha-D-glucose pocket.

This sequence belongs to the glycosyltransferase 1 family. Bacterial/plant glycogen synthase subfamily.

The enzyme catalyses [(1-&gt;4)-alpha-D-glucosyl](n) + ADP-alpha-D-glucose = [(1-&gt;4)-alpha-D-glucosyl](n+1) + ADP + H(+). The protein operates within glycan biosynthesis; glycogen biosynthesis. Functionally, synthesizes alpha-1,4-glucan chains using ADP-glucose. The sequence is that of Glycogen synthase from Cereibacter sphaeroides (strain ATCC 17023 / DSM 158 / JCM 6121 / CCUG 31486 / LMG 2827 / NBRC 12203 / NCIMB 8253 / ATH 2.4.1.) (Rhodobacter sphaeroides).